The chain runs to 422 residues: Keratan-sulfate endo-1,4-beta-galactosidase (422 aa).

The signal sequence occupies residues M1–L46. The region spanning N47–F292 is the GH16 domain. E171 (nucleophile) is an active-site residue. The active-site Proton donor is E176. The region spanning L291–K406 is the CBM-cenC domain.

Belongs to the glycosyl hydrolase 16 family.

It is found in the secreted. The catalysed reaction is Endohydrolysis of (1-&gt;4)-beta-D-galactosidic linkages in keratan sulfate.. Functionally, hydrolyzes internal endo-beta-galactosyl linkages in keratan sulfate and in various neolacto-type glycosphingolipids, producing sulfated and non-sulfated disaccharides, and glucosylceramides respectivly. The chain is Keratan-sulfate endo-1,4-beta-galactosidase from Sphingobacterium multivorum.